The following is a 126-amino-acid chain: Flagellar protein FliT (126 aa).

The required for homodimerization stretch occupies residues 1–50; that stretch reads MASPHRLLKDYQQLLSLSQKILHLAVNGQWDTLVEQEIVYVQSVEGLVNT. The tract at residues 60–98 is fliD binding; it reads MRLHLRQILQEVMDNEAKVKQLLQKRMDELSSLMGQSLK.

The protein belongs to the FliT family. In terms of assembly, homodimer. Interacts with FliD and FlhC.

The protein localises to the cytoplasm. It is found in the cytosol. Its function is as follows. Dual-function protein that regulates the transcription of class 2 flagellar operons and that also acts as an export chaperone for the filament-capping protein FliD. As a transcriptional regulator, acts as an anti-FlhDC factor; it directly binds FlhC, thus inhibiting the binding of the FlhC/FlhD complex to class 2 promoters, resulting in decreased expression of class 2 flagellar operons. As a chaperone, effects FliD transition to the membrane by preventing its premature polymerization, and by directing it to the export apparatus. This is Flagellar protein FliT from Pectobacterium carotovorum subsp. carotovorum (strain PC1).